The following is a 345-amino-acid chain: 4-hydroxy-3-methylbut-2-en-1-yl diphosphate synthase (flavodoxin) (345 aa).

4 residues coordinate [4Fe-4S] cluster: Cys271, Cys274, Cys306, and Glu313.

The protein belongs to the IspG family. Requires [4Fe-4S] cluster as cofactor.

The enzyme catalyses (2E)-4-hydroxy-3-methylbut-2-enyl diphosphate + oxidized [flavodoxin] + H2O + 2 H(+) = 2-C-methyl-D-erythritol 2,4-cyclic diphosphate + reduced [flavodoxin]. Its pathway is isoprenoid biosynthesis; isopentenyl diphosphate biosynthesis via DXP pathway; isopentenyl diphosphate from 1-deoxy-D-xylulose 5-phosphate: step 5/6. In terms of biological role, converts 2C-methyl-D-erythritol 2,4-cyclodiphosphate (ME-2,4cPP) into 1-hydroxy-2-methyl-2-(E)-butenyl 4-diphosphate. This chain is 4-hydroxy-3-methylbut-2-en-1-yl diphosphate synthase (flavodoxin), found in Haemophilus influenzae (strain PittEE).